The primary structure comprises 556 residues: Formate--tetrahydrofolate ligase 1 (556 aa).

65–72 (TPAGEGKS) is an ATP binding site.

This sequence belongs to the formate--tetrahydrofolate ligase family.

The enzyme catalyses (6S)-5,6,7,8-tetrahydrofolate + formate + ATP = (6R)-10-formyltetrahydrofolate + ADP + phosphate. It participates in one-carbon metabolism; tetrahydrofolate interconversion. The protein is Formate--tetrahydrofolate ligase 1 of Streptococcus pyogenes serotype M4 (strain MGAS10750).